We begin with the raw amino-acid sequence, 302 residues long: N-acetylaspartate synthetase (302 aa).

A compositionally biased stretch (pro residues) spans 46-60 (PGPAAAPPAPPPAPV). The tract at residues 46–72 (PGPAAAPPAPPPAPVAQPHGGAGGAGP) is disordered. Residues 121-141 (YALLAALCFAVSRSLLLTCLV) form a helical membrane-spanning segment. Positions 143-283 (AALLGLRYYY…VLPGMTLSLA (141 aa)) constitute an N-acetyltransferase domain.

It belongs to the NAT8 family. As to expression, expressed in brain.

It is found in the cytoplasm. It localises to the microsome membrane. The protein resides in the mitochondrion membrane. Its subcellular location is the endoplasmic reticulum membrane. It catalyses the reaction L-aspartate + acetyl-CoA = N-acetyl-L-aspartate + CoA + H(+). Its activity is regulated as follows. Aminooxyacetic acid (AOAA) blocks its activity in both cytoplasm and mitochondria. Functionally, catalyzes the synthesis of N-acetylaspartate acid (NAA) from L-aspartate and acetyl-CoA. Promotes dopamine uptake by regulating TNF-alpha expression. Attenuates methamphetamine-induced inhibition of dopamine uptake. The sequence is that of N-acetylaspartate synthetase from Homo sapiens (Human).